The sequence spans 277 residues: MIIRYYKPYTSGTRKRSVSNFSEITKSNPEKYLTFFVHRSKGRNSRGVITCRTLGGGHKRLYRRIEFKRNKLGILGKVISIEYDPNRNARIALIYYKNGDKSYIIHPFDLCVGNNIISDFFSPIKIGNSLPISKIPLGTIIHNVEFEPGKGGQIARAAGTFVQILANEGKFVTITMPSGEVRLLRRYCWATIGQVGNLDHSNVVLGKAGRNRWLGNKPTVRGVAMNPCDHPHGGGEGRSPIGRPKPVTPWGKPALGKKTRSPKRFSNKYIIRSRKMV.

The segment at 225–277 (MNPCDHPHGGGEGRSPIGRPKPVTPWGKPALGKKTRSPKRFSNKYIIRSRKMV) is disordered. Residues 255-277 (LGKKTRSPKRFSNKYIIRSRKMV) show a composition bias toward basic residues.

The protein belongs to the universal ribosomal protein uL2 family. As to quaternary structure, part of the 50S ribosomal subunit.

The protein localises to the plastid. The protein resides in the chloroplast. In Euglena gracilis, this protein is Large ribosomal subunit protein uL2c (rpl2).